A 41-amino-acid polypeptide reads, in one-letter code: trp operon leader peptide (41 aa).

Its function is as follows. This protein is involved in control of the biosynthesis of tryptophan. The polypeptide is trp operon leader peptide (trpL) (Vibrio parahaemolyticus serotype O3:K6 (strain RIMD 2210633)).